The primary structure comprises 138 residues: Translation initiation factor 5A (138 aa).

At lysine 37 the chain carries Hypusine.

The protein belongs to the eIF-5A family.

The protein localises to the cytoplasm. Its function is as follows. Functions by promoting the formation of the first peptide bond. In Thermococcus sibiricus (strain DSM 12597 / MM 739), this protein is Translation initiation factor 5A (eIF5A).